The primary structure comprises 354 residues: Molybdenum import ATP-binding protein ModC (354 aa).

One can recognise an ABC transporter domain in the interval 1 to 229; the sequence is MLELDFEQQL…SALRLWLQKE (229 aa). ATP is bound at residue 31–38; it reads GLSGAGKT. Positions 289–354 constitute a Mop domain; the sequence is GSSIRNILAV…IKSVSFHRQL (66 aa).

This sequence belongs to the ABC transporter superfamily. Molybdate importer (TC 3.A.1.8) family. In terms of assembly, the complex is composed of two ATP-binding proteins (ModC), two transmembrane proteins (ModB) and a solute-binding protein (ModA).

It localises to the cell inner membrane. It catalyses the reaction molybdate(out) + ATP + H2O = molybdate(in) + ADP + phosphate + H(+). Part of the ABC transporter complex ModABC involved in molybdenum import. Responsible for energy coupling to the transport system. The protein is Molybdenum import ATP-binding protein ModC of Photorhabdus laumondii subsp. laumondii (strain DSM 15139 / CIP 105565 / TT01) (Photorhabdus luminescens subsp. laumondii).